We begin with the raw amino-acid sequence, 434 residues long: Nicotinate phosphoribosyltransferase (434 aa).

Histidine 242 is subject to Phosphohistidine; by autocatalysis.

Belongs to the NAPRTase family. In terms of processing, transiently phosphorylated on a His residue during the reaction cycle. Phosphorylation strongly increases the affinity for substrates and increases the rate of nicotinate D-ribonucleotide production. Dephosphorylation regenerates the low-affinity form of the enzyme, leading to product release.

The enzyme catalyses nicotinate + 5-phospho-alpha-D-ribose 1-diphosphate + ATP + H2O = nicotinate beta-D-ribonucleotide + ADP + phosphate + diphosphate. It functions in the pathway cofactor biosynthesis; NAD(+) biosynthesis; nicotinate D-ribonucleotide from nicotinate: step 1/1. In terms of biological role, catalyzes the synthesis of beta-nicotinate D-ribonucleotide from nicotinate and 5-phospho-D-ribose 1-phosphate at the expense of ATP. The protein is Nicotinate phosphoribosyltransferase of Sinorhizobium medicae (strain WSM419) (Ensifer medicae).